A 418-amino-acid polypeptide reads, in one-letter code: Serine hydroxymethyltransferase (418 aa).

(6S)-5,6,7,8-tetrahydrofolate contacts are provided by residues L120 and G124 to L126. An N6-(pyridoxal phosphate)lysine modification is found at K229.

This sequence belongs to the SHMT family. In terms of assembly, homodimer. Pyridoxal 5'-phosphate is required as a cofactor.

Its subcellular location is the cytoplasm. The enzyme catalyses (6R)-5,10-methylene-5,6,7,8-tetrahydrofolate + glycine + H2O = (6S)-5,6,7,8-tetrahydrofolate + L-serine. Its pathway is one-carbon metabolism; tetrahydrofolate interconversion. It functions in the pathway amino-acid biosynthesis; glycine biosynthesis; glycine from L-serine: step 1/1. In terms of biological role, catalyzes the reversible interconversion of serine and glycine with tetrahydrofolate (THF) serving as the one-carbon carrier. This reaction serves as the major source of one-carbon groups required for the biosynthesis of purines, thymidylate, methionine, and other important biomolecules. Also exhibits THF-independent aldolase activity toward beta-hydroxyamino acids, producing glycine and aldehydes, via a retro-aldol mechanism. In Myxococcus xanthus (strain DK1622), this protein is Serine hydroxymethyltransferase.